Here is a 173-residue protein sequence, read N- to C-terminus: Shikimate kinase 1 (173 aa).

G14–T19 serves as a coordination point for ATP. S18 is a binding site for Mg(2+). D36, R60, and G82 together coordinate substrate. R120 contacts ATP. Position 140 (R140) interacts with substrate. Q157 lines the ATP pocket.

Belongs to the shikimate kinase family. In terms of assembly, monomer. Requires Mg(2+) as cofactor.

The protein resides in the cytoplasm. It catalyses the reaction shikimate + ATP = 3-phosphoshikimate + ADP + H(+). It participates in metabolic intermediate biosynthesis; chorismate biosynthesis; chorismate from D-erythrose 4-phosphate and phosphoenolpyruvate: step 5/7. In terms of biological role, catalyzes the specific phosphorylation of the 3-hydroxyl group of shikimic acid using ATP as a cosubstrate. This is Shikimate kinase 1 from Erwinia tasmaniensis (strain DSM 17950 / CFBP 7177 / CIP 109463 / NCPPB 4357 / Et1/99).